Reading from the N-terminus, the 686-residue chain is MMQESGTETKSNGSAIQNGASGGNHLLECSLREVRSNGETPSVEIGAADLTHLQQQQALQVARQLLLQQQQQQQQQQQQQQQQQVSGLKSPKRNDKQPALQVPVSVAMMTPQVITPQQMQQILQQQVLTPQQLQVLLQQQQALMLQQQQLQEFYKKQQEQLQLQLLQQQHAGKQPKEPQQQQVATQQLAFQQQLLQMQQLQQQHLLTLQRQGLLTIQPGQPTLPLQPLAQGMIPTELQQLWKEVTSSHTAEEAASNNHSSLDLSTTCVSSSAPSKTSLIINPHASTNGQLSVHTPKRESLSHEEHSHSHPLYGHGVCKWPGCEAVCEDFQSFLKHLNSEHALDDRSTAQCRVQMQVVQQLELQLAKDKERLQAMMTHLHVKSTEPKATPQPLNLVSSVTLSKTASEASPQSLPHTPTTPTAPITPVTQGPSVITTTSMHNVGPIRRRYSDKYNVPISSADIAQNQEFYKNAEVRPPFTYASLIRQAILESPEKQLTLNEIYNWFTRMFAYFRRNAATWKNAVRHNLSLHKCFVRVENVKGAVWTVDEQEFQKRRPQKISGNPSLIKNIQTSHTYCTPLNAALQASMAENSIPLYTTASMGNPTLGNLANVMREELNGAMEHTNSNGSDSSPGRSPMQAMHPVHVKEEPLDPDENEGPLSLVTTANHSPDFDHDRDYEDEPVNEDIE.

Polar residues-rich tracts occupy residues 1–19 and 279–292; these read MMQE…IQNG and IINP…QLSV. Disordered stretches follow at residues 1–23 and 279–306; these read MMQE…ASGG and IINP…EEHS. Positions 295 to 306 are enriched in basic and acidic residues; sequence PKRESLSHEEHS. The C2H2-type zinc-finger motif lies at 315–340; the sequence is GVCKWPGCEAVCEDFQSFLKHLNSEH. The interval 357–378 is leucine-zipper; the sequence is VQQLELQLAKDKERLQAMMTHL. The CTBP1-binding stretch occupies residues 391–395; that stretch reads PLNLV. A compositionally biased stretch (polar residues) spans 403–412; sequence TASEASPQSL. Positions 403–440 are disordered; it reads TASEASPQSLPHTPTTPTAPITPVTQGPSVITTTSMHN. A compositionally biased stretch (low complexity) spans 413–427; it reads PHTPTTPTAPITPVT. Residues 428 to 439 are compositionally biased toward polar residues; the sequence is QGPSVITTTSMH. The fork-head DNA-binding region spans 474–564; that stretch reads RPPFTYASLI…PQKISGNPSL (91 aa). The segment at 619 to 686 is disordered; it reads MEHTNSNGSD…EDEPVNEDIE (68 aa). Residues 621-632 show a composition bias toward polar residues; sequence HTNSNGSDSSPG. The segment covering 676-686 has biased composition (acidic residues); sequence YEDEPVNEDIE.

The protein resides in the nucleus. In terms of biological role, transcriptional repressor. The sequence is that of Forkhead box protein P1 (FOXP1) from Gallus gallus (Chicken).